Here is a 431-residue protein sequence, read N- to C-terminus: Glucose-1-phosphate adenylyltransferase (431 aa).

Lysine 39 provides a ligand contact to beta-D-fructose 1,6-bisphosphate. AMP contacts are provided by arginine 40, histidine 46, and arginine 52. Tyrosine 114 contacts alpha-D-glucose 1-phosphate. Arginine 130 provides a ligand contact to AMP. Alpha-D-glucose 1-phosphate contacts are provided by residues glycine 179, 194–195 (EK), and serine 212. AMP contacts are provided by glutamate 370 and arginine 386. Beta-D-fructose 1,6-bisphosphate contacts are provided by residues 419-423 (REMLR) and 429-431 (QER).

It belongs to the bacterial/plant glucose-1-phosphate adenylyltransferase family. In terms of assembly, homotetramer.

The catalysed reaction is alpha-D-glucose 1-phosphate + ATP + H(+) = ADP-alpha-D-glucose + diphosphate. The protein operates within glycan biosynthesis; glycogen biosynthesis. Its activity is regulated as follows. Allosterically activated by fructose-1,6-bisphosphate (F16BP) and inhibited by AMP. Its function is as follows. Involved in the biosynthesis of ADP-glucose, a building block required for the elongation reactions to produce glycogen. Catalyzes the reaction between ATP and alpha-D-glucose 1-phosphate (G1P) to produce pyrophosphate and ADP-Glc. The chain is Glucose-1-phosphate adenylyltransferase from Escherichia fergusonii (strain ATCC 35469 / DSM 13698 / CCUG 18766 / IAM 14443 / JCM 21226 / LMG 7866 / NBRC 102419 / NCTC 12128 / CDC 0568-73).